A 177-amino-acid chain; its full sequence is 3-hydroxydecanoyl-[acyl-carrier-protein] dehydratase (177 aa).

The active site involves His76.

This sequence belongs to the thioester dehydratase family. FabA subfamily. In terms of assembly, homodimer.

It is found in the cytoplasm. The enzyme catalyses a (3R)-hydroxyacyl-[ACP] = a (2E)-enoyl-[ACP] + H2O. It carries out the reaction (3R)-hydroxydecanoyl-[ACP] = (2E)-decenoyl-[ACP] + H2O. The catalysed reaction is (2E)-decenoyl-[ACP] = (3Z)-decenoyl-[ACP]. It functions in the pathway lipid metabolism; fatty acid biosynthesis. Functionally, necessary for the introduction of cis unsaturation into fatty acids. Catalyzes the dehydration of (3R)-3-hydroxydecanoyl-ACP to E-(2)-decenoyl-ACP and then its isomerization to Z-(3)-decenoyl-ACP. Can catalyze the dehydratase reaction for beta-hydroxyacyl-ACPs with saturated chain lengths up to 16:0, being most active on intermediate chain length. This Actinobacillus succinogenes (strain ATCC 55618 / DSM 22257 / CCUG 43843 / 130Z) protein is 3-hydroxydecanoyl-[acyl-carrier-protein] dehydratase.